The sequence spans 197 residues: Ribonuclease HII (197 aa).

Residues 11–197 enclose the RNase H type-2 domain; sequence GRIAGVDEVG…FGPVKRVLGL (187 aa). Residues Asp-17, Glu-18, and Asp-109 each contribute to the a divalent metal cation site.

This sequence belongs to the RNase HII family. It depends on Mn(2+) as a cofactor. Mg(2+) is required as a cofactor.

It localises to the cytoplasm. The enzyme catalyses Endonucleolytic cleavage to 5'-phosphomonoester.. In terms of biological role, endonuclease that specifically degrades the RNA of RNA-DNA hybrids. The protein is Ribonuclease HII of Edwardsiella ictaluri (strain 93-146).